Here is a 365-residue protein sequence, read N- to C-terminus: Mitogen-activated protein kinase p38b (365 aa).

The 288-residue stretch at 24–311 (YQNLQPVGQG…AEQALAHPYM (288 aa)) folds into the Protein kinase domain. ATP is bound by residues 30–38 (VGQGAYGQV) and Lys-53. Asp-153 (proton acceptor) is an active-site residue. The residue at position 183 (Thr-183) is a Phosphothreonine. The short motif at 183-185 (TGY) is the TXY element. At Tyr-185 the chain carries Phosphotyrosine.

This sequence belongs to the protein kinase superfamily. CMGC Ser/Thr protein kinase family. MAP kinase subfamily. Mg(2+) serves as cofactor. Dually phosphorylated on Thr-183 and Tyr-185, which activates the enzyme. As to expression, at mid-embryogenesis, highest expression is seen in developing anterior and posterior midguts. Almost ubiquitous expression throughout all development.

The protein localises to the nucleus. It carries out the reaction L-seryl-[protein] + ATP = O-phospho-L-seryl-[protein] + ADP + H(+). The catalysed reaction is L-threonyl-[protein] + ATP = O-phospho-L-threonyl-[protein] + ADP + H(+). Activated by threonine and tyrosine phosphorylation by Mkk3. Kinase involved in dpp signal transduction pathway in the process of wing morphogenesis when the levels of dpp are enhanced or inhibited. May down-regulate insect immunity gene expression after prolonged infection. This Drosophila melanogaster (Fruit fly) protein is Mitogen-activated protein kinase p38b.